Consider the following 322-residue polypeptide: CRISPR-associated endonuclease Cas1 (322 aa).

The Mn(2+) site is built by E149, H214, and E229.

Belongs to the CRISPR-associated endonuclease Cas1 family. In terms of assembly, homodimer, forms a heterotetramer with a Cas2 homodimer. The cofactor is Mg(2+). Mn(2+) serves as cofactor.

Functionally, CRISPR (clustered regularly interspaced short palindromic repeat), is an adaptive immune system that provides protection against mobile genetic elements (viruses, transposable elements and conjugative plasmids). CRISPR clusters contain spacers, sequences complementary to antecedent mobile elements, and target invading nucleic acids. CRISPR clusters are transcribed and processed into CRISPR RNA (crRNA). Acts as a dsDNA endonuclease. Involved in the integration of spacer DNA into the CRISPR cassette. This chain is CRISPR-associated endonuclease Cas1, found in Methanocaldococcus jannaschii (strain ATCC 43067 / DSM 2661 / JAL-1 / JCM 10045 / NBRC 100440) (Methanococcus jannaschii).